Consider the following 225-residue polypeptide: Tryptophan synthase beta chain (225 aa).

This sequence belongs to the TrpB family. Tetramer of two alpha and two beta chains. Pyridoxal 5'-phosphate is required as a cofactor.

The catalysed reaction is (1S,2R)-1-C-(indol-3-yl)glycerol 3-phosphate + L-serine = D-glyceraldehyde 3-phosphate + L-tryptophan + H2O. The protein operates within amino-acid biosynthesis; L-tryptophan biosynthesis; L-tryptophan from chorismate: step 5/5. Its function is as follows. The beta subunit is responsible for the synthesis of L-tryptophan from indole and L-serine. In Buchnera aphidicola subsp. Rhopalosiphum padi, this protein is Tryptophan synthase beta chain (trpB).